Reading from the N-terminus, the 588-residue chain is Adenine deaminase (588 aa).

It belongs to the metallo-dependent hydrolases superfamily. Adenine deaminase family. In terms of assembly, homodimer. Mn(2+) serves as cofactor.

The enzyme catalyses adenine + H2O + H(+) = hypoxanthine + NH4(+). This chain is Adenine deaminase, found in Escherichia coli O7:K1 (strain IAI39 / ExPEC).